The following is a 57-amino-acid chain: MSKTIVRKNESIDDALRRFKRAVSKTGTLQEVRKREFYEKPSVRRKKKSEAARKRKH.

The protein belongs to the bacterial ribosomal protein bS21 family.

This is Small ribosomal subunit protein bS21 from Geobacillus kaustophilus (strain HTA426).